A 378-amino-acid chain; its full sequence is Ribosomal RNA large subunit methyltransferase G (378 aa).

It belongs to the methyltransferase superfamily. RlmG family.

Its subcellular location is the cytoplasm. The catalysed reaction is guanosine(1835) in 23S rRNA + S-adenosyl-L-methionine = N(2)-methylguanosine(1835) in 23S rRNA + S-adenosyl-L-homocysteine + H(+). Functionally, specifically methylates the guanine in position 1835 (m2G1835) of 23S rRNA. The polypeptide is Ribosomal RNA large subunit methyltransferase G (Shigella dysenteriae serotype 1 (strain Sd197)).